A 1036-amino-acid chain; its full sequence is uncharacterized protein (1036 aa).

The next 2 helical transmembrane spans lie at 4 to 24 (YLFIPLLVSFLFPVALANASL) and 1004 to 1024 (ILWVIFGIIISLMISSAVLFL).

The protein belongs to the MG414/MG415 family.

The protein resides in the cell membrane. This is an uncharacterized protein from Mycoplasma genitalium (strain ATCC 33530 / DSM 19775 / NCTC 10195 / G37) (Mycoplasmoides genitalium).